Here is a 484-residue protein sequence, read N- to C-terminus: Threonine synthase-like 2 (484 aa).

At Lys113 the chain carries N6-(pyridoxal phosphate)lysine.

This sequence belongs to the threonine synthase family. Pyridoxal 5'-phosphate is required as a cofactor.

Its subcellular location is the secreted. Functionally, acts as a catabolic phospho-lyase on both gamma- and beta-phosphorylated substrates. Degrades O-phospho-threonine (PThr) to alpha-ketobutyrate, ammonia and phosphate. In terms of biological role, potent inducer of osteoblastic production of IL6. May act to exacerbate inflammation and/or bone turnover under inflammatory conditions. This is Threonine synthase-like 2 (THNSL2) from Homo sapiens (Human).